Reading from the N-terminus, the 279-residue chain is Oxygen-dependent coproporphyrinogen-III oxidase (279 aa).

S102 is a binding site for substrate. Residues H106 and H116 each coordinate a divalent metal cation. H116 serves as the catalytic Proton donor. 118–120 (NTR) contacts substrate. Residues H149 and H179 each contribute to the a divalent metal cation site. The important for dimerization stretch occupies residues 244 to 279 (YVEFNLLYDRGTKFGLMTDGNVEAILMSLPPEVKFN).

The protein belongs to the aerobic coproporphyrinogen-III oxidase family. Homodimer. Requires a divalent metal cation as cofactor.

It is found in the cytoplasm. The catalysed reaction is coproporphyrinogen III + O2 + 2 H(+) = protoporphyrinogen IX + 2 CO2 + 2 H2O. It functions in the pathway porphyrin-containing compound metabolism; protoporphyrin-IX biosynthesis; protoporphyrinogen-IX from coproporphyrinogen-III (O2 route): step 1/1. Functionally, involved in the heme biosynthesis. Catalyzes the aerobic oxidative decarboxylation of propionate groups of rings A and B of coproporphyrinogen-III to yield the vinyl groups in protoporphyrinogen-IX. The polypeptide is Oxygen-dependent coproporphyrinogen-III oxidase (Rickettsia felis (strain ATCC VR-1525 / URRWXCal2) (Rickettsia azadi)).